The sequence spans 488 residues: Rhamnulokinase (488 aa).

13-17 contacts ATP; the sequence is ASSGR. A disulfide bridge links Cys68 with Cys222. Substrate is bound by residues Gly83 and 236–238; that span reads HDT. Asp237 serves as the catalytic Proton acceptor. Position 259 (Thr259) interacts with ATP. Position 296 (Asn296) interacts with substrate. ATP is bound at residue Gln304. A disulfide bridge links Cys353 with Cys370. Gly402 contributes to the ATP binding site. A disulfide bridge links Cys413 with Cys417.

The protein belongs to the rhamnulokinase family. Mg(2+) serves as cofactor.

The catalysed reaction is L-rhamnulose + ATP = L-rhamnulose 1-phosphate + ADP + H(+). It functions in the pathway carbohydrate degradation; L-rhamnose degradation; glycerone phosphate from L-rhamnose: step 2/3. Its function is as follows. Involved in the catabolism of L-rhamnose (6-deoxy-L-mannose). Catalyzes the transfer of the gamma-phosphate group from ATP to the 1-hydroxyl group of L-rhamnulose to yield L-rhamnulose 1-phosphate. This is Rhamnulokinase from Klebsiella pneumoniae (strain 342).